The chain runs to 177 residues: Interleukin-10 (177 aa).

Positions 1 to 19 are cleaved as a signal peptide; it reads MPSSSAVLCCLVFLAGVAA. 2 cysteine pairs are disulfide-bonded: C31–C127 and C81–C133. A glycan (N-linked (GlcNAc...) asparagine) is linked at N135.

Belongs to the IL-10 family. Homodimer. Interacts with IL10RA and IL10RB.

It localises to the secreted. In terms of biological role, major immune regulatory cytokine that acts on many cells of the immune system where it has profound anti-inflammatory functions, limiting excessive tissue disruption caused by inflammation. Mechanistically, IL10 binds to its heterotetrameric receptor comprising IL10RA and IL10RB leading to JAK1 and STAT2-mediated phosphorylation of STAT3. In turn, STAT3 translocates to the nucleus where it drives expression of anti-inflammatory mediators. Targets antigen-presenting cells (APCs) such as macrophages and monocytes and inhibits their release of pro-inflammatory cytokines including granulocyte-macrophage colony-stimulating factor /GM-CSF, granulocyte colony-stimulating factor/G-CSF, IL-1 alpha, IL-1 beta, IL-6, IL-8 and TNF-alpha. Also interferes with antigen presentation by reducing the expression of MHC-class II and co-stimulatory molecules, thereby inhibiting their ability to induce T cell activation. In addition, controls the inflammatory response of macrophages by reprogramming essential metabolic pathways including mTOR signaling. This chain is Interleukin-10 (IL10), found in Ovis aries (Sheep).